The sequence spans 391 residues: Origin recognition complex subunit 2 (391 aa).

The interval 1–43 (MEEYTDSGEDKNVYSDDDNDYFTASTQNNRTSKNTDSSPLDPK) is disordered. Residues 22 to 38 (FTASTQNNRTSKNTDSS) are compositionally biased toward polar residues.

Belongs to the ORC2 family. As to quaternary structure, ORC is composed of six subunits.

It is found in the nucleus. In terms of biological role, component of the origin recognition complex (ORC) that binds origins of replication. DNA-binding is ATP-dependent, however specific DNA sequences that define origins of replication have not been identified so far. ORC is required to assemble the pre-replication complex necessary to initiate DNA replication. The chain is Origin recognition complex subunit 2 (orcB) from Dictyostelium discoideum (Social amoeba).